The sequence spans 604 residues: ATP-dependent RNA helicase DED1 (604 aa).

Polar residues predominate over residues 1–19 (MAELSEQVQNLSINDNNEN). Residues 1–55 (MAELSEQVQNLSINDNNENGYVPPHLRGKPRSARNNSSNYNNNNGGYNGGRGGGS) are disordered. An N-acetylalanine modification is found at Ala-2. Low complexity predominate over residues 34-45 (RNNSSNYNNNNG). Gly residues predominate over residues 46-55 (GYNGGRGGGS). At Arg-51 the chain carries Omega-N-methylarginine. At Arg-62 the chain carries Dimethylated arginine; alternate. Arg-62 is modified (omega-N-methylarginine; alternate). Residues 67–76 (NGGFFGGNNG) show a composition bias toward gly residues. Residues 67 to 94 (NGGFFGGNNGGSRSNGRSGGRWIDGKHV) are disordered. A Q motif motif is present at residues 142 to 170 (TEFTSPPLDGLLLENIKLARFTKPTPVQK). Lys-158 is covalently cross-linked (Glycyl lysine isopeptide (Lys-Gly) (interchain with G-Cter in ubiquitin)). Residues 173 to 362 (VPIVANGRDL…RDFLSDYIFL (190 aa)) enclose the Helicase ATP-binding domain. Residue 186–193 (AQTGSGKT) coordinates ATP. Ser-215, Ser-218, and Ser-263 each carry phosphoserine. Positions 306–309 (DEAD) match the DEAD box motif. Positions 373 to 533 (NITQKVLYVE…EVPSFLKDAM (161 aa)) constitute a Helicase C-terminal domain. The interval 533–604 (MMSAPGSRSN…SGGSNNSSWW (72 aa)) is disordered. Phosphoserine occurs at positions 535, 539, and 543. Residue Arg-545 is modified to Dimethylated arginine; alternate. Arg-545 is subject to Omega-N-methylarginine; alternate. Phosphoserine is present on residues Ser-572 and Ser-576. Omega-N-methylarginine is present on Arg-578. The span at 584–604 (GSDSKSSGWGNSGGSNNSSWW) shows a compositional bias: low complexity. Residue Ser-598 is modified to Phosphoserine.

Belongs to the DEAD box helicase family. DDX3/DED1 subfamily. Interacts with the L-A virus GAG protein and the whole L-A virus particles.

It is found in the cytoplasm. It carries out the reaction ATP + H2O = ADP + phosphate + H(+). ATP-binding RNA helicase involved in translation initiation. Remodels RNA in response to ADP and ATP concentrations by facilitating disruption, but also formation of RNA duplexes. Has weak ATP-dependent affinity for dsRNA, but strong ATP-dependent affinity for ssRNA. Acts as a virus host factor involved in the replication of the MBV and the L-A viruses by promoting the negative-strand RNA synthesis. May be involved in recognition of the preinitiation complex and DNA binding of the RNA polymerase III and play a role in mRNA splicing. This is ATP-dependent RNA helicase DED1 from Saccharomyces cerevisiae (strain ATCC 204508 / S288c) (Baker's yeast).